Reading from the N-terminus, the 494-residue chain is Alpha-amylase-related protein (494 aa).

The signal sequence occupies residues 1–20 (MFKFALALTLCLAGASLSLA). Pyrrolidone carboxylic acid is present on Q21. Residues C48 and C104 are joined by a disulfide bond. Ca(2+) contacts are provided by N118, Q169, and D178. C157 and C171 form a disulfide bridge. R206 is a binding site for chloride. D208 acts as the Nucleophile in catalysis. H212 contacts Ca(2+). E245 (proton donor) is an active-site residue. Chloride contacts are provided by N308 and R343. 3 cysteine pairs are disulfide-bonded: C376–C382, C418–C441, and C448–C460.

This sequence belongs to the glycosyl hydrolase 13 family. Monomer. It depends on Ca(2+) as a cofactor. The cofactor is chloride.

Its subcellular location is the secreted. It carries out the reaction Endohydrolysis of (1-&gt;4)-alpha-D-glucosidic linkages in polysaccharides containing three or more (1-&gt;4)-alpha-linked D-glucose units.. This Drosophila dossoui (Fruit fly) protein is Alpha-amylase-related protein (Amyrel).